The primary structure comprises 278 residues: Transmembrane protein 41B (278 aa).

Residues 1-31 (MQVHERSHTGGHTFQCNHGNEKKAPAAGKVH) are disordered. 6 consecutive transmembrane segments (helical) span residues 39–59 (MSLL…FLVY), 96–116 (FYVE…TFAI), 142–162 (CSGL…RPVV), 184–204 (LINY…FINI), 212–232 (PLKV…FVAI), and 249–269 (SWNS…PAIF). The VTT domain; required for its function in autophagy stretch occupies residues 127–238 (GFLYPFPLAL…FVAIKAGTTL (112 aa)).

Belongs to the TMEM41 family.

The protein localises to the endoplasmic reticulum membrane. Its subcellular location is the endomembrane system. The enzyme catalyses a 1,2-diacyl-sn-glycero-3-phospho-L-serine(in) = a 1,2-diacyl-sn-glycero-3-phospho-L-serine(out). The catalysed reaction is cholesterol(in) = cholesterol(out). It catalyses the reaction a 1,2-diacyl-sn-glycero-3-phosphocholine(in) = a 1,2-diacyl-sn-glycero-3-phosphocholine(out). It carries out the reaction a 1,2-diacyl-sn-glycero-3-phosphoethanolamine(in) = a 1,2-diacyl-sn-glycero-3-phosphoethanolamine(out). Phospholipid scramblase involved in lipid homeostasis and membrane dynamics processes. Has phospholipid scramblase activity toward cholesterol and phosphatidylserine, as well as phosphatidylethanolamine and phosphatidylcholine. Required for autophagosome formation: participates in early stages of autophagosome biogenesis at the endoplasmic reticulum (ER) membrane by reequilibrating the leaflets of the ER as lipids are extracted by atg2 (atg2a or atg2b) to mediate autophagosome assembly. In addition to autophagy, involved in other processes in which phospholipid scramblase activity is required. Required for normal motor neuron development. The protein is Transmembrane protein 41B of Xenopus laevis (African clawed frog).